A 216-amino-acid chain; its full sequence is V-type ATP synthase subunit D (216 aa).

This sequence belongs to the V-ATPase D subunit family.

Its function is as follows. Produces ATP from ADP in the presence of a proton gradient across the membrane. The protein is V-type ATP synthase subunit D of Clostridium novyi (strain NT).